The following is a 373-amino-acid chain: Glutamate 5-kinase (373 aa).

Residue Lys15 participates in ATP binding. 3 residues coordinate substrate: Ser55, Asp142, and Asn154. 174 to 175 (TD) is an ATP binding site. The PUA domain maps to 281–359 (RGSVVLDDGA…SQIEAVLGYV (79 aa)).

This sequence belongs to the glutamate 5-kinase family.

It is found in the cytoplasm. It carries out the reaction L-glutamate + ATP = L-glutamyl 5-phosphate + ADP. Its pathway is amino-acid biosynthesis; L-proline biosynthesis; L-glutamate 5-semialdehyde from L-glutamate: step 1/2. Functionally, catalyzes the transfer of a phosphate group to glutamate to form L-glutamate 5-phosphate. The chain is Glutamate 5-kinase from Nitrosomonas eutropha (strain DSM 101675 / C91 / Nm57).